A 128-amino-acid chain; its full sequence is Crossover junction endodeoxyribonuclease Hjc (128 aa).

Glutamate 10 provides a ligand contact to Mg(2+). Residue serine 30 is part of the active site. Mg(2+)-binding residues include aspartate 34 and glutamate 47.

This sequence belongs to the Holliday junction resolvase Hjc family. Homodimer. Mg(2+) is required as a cofactor.

It carries out the reaction Endonucleolytic cleavage at a junction such as a reciprocal single-stranded crossover between two homologous DNA duplexes (Holliday junction).. Its function is as follows. A structure-specific endonuclease that resolves Holliday junction (HJ) intermediates during genetic recombination. Cleaves 4-way DNA junctions introducing paired nicks in opposing strands, leaving a 5'-terminal phosphate and a 3'-terminal hydroxyl group that are subsequently ligated to produce recombinant products. The sequence is that of Crossover junction endodeoxyribonuclease Hjc from Thermococcus kodakarensis (strain ATCC BAA-918 / JCM 12380 / KOD1) (Pyrococcus kodakaraensis (strain KOD1)).